A 142-amino-acid chain; its full sequence is Membrane protein YneK (142 aa).

A helical transmembrane segment spans residues 6-26; the sequence is FLWFILFWVIMMVVLLSIGGF.

In terms of assembly, interacts with the N-terminal D1 domain of dynamin-like protein DynA.

It is found in the cell membrane. In Bacillus subtilis (strain 168), this protein is Membrane protein YneK (yneK).